A 163-amino-acid chain; its full sequence is Peptide methionine sulfoxide reductase MsrA 1 (163 aa).

The active site involves Cys21.

It belongs to the MsrA Met sulfoxide reductase family.

It catalyses the reaction L-methionyl-[protein] + [thioredoxin]-disulfide + H2O = L-methionyl-(S)-S-oxide-[protein] + [thioredoxin]-dithiol. The catalysed reaction is [thioredoxin]-disulfide + L-methionine + H2O = L-methionine (S)-S-oxide + [thioredoxin]-dithiol. Has an important function as a repair enzyme for proteins that have been inactivated by oxidation. Catalyzes the reversible oxidation-reduction of methionine sulfoxide in proteins to methionine. The polypeptide is Peptide methionine sulfoxide reductase MsrA 1 (msrA1) (Nostoc sp. (strain PCC 7120 / SAG 25.82 / UTEX 2576)).